Consider the following 412-residue polypeptide: Heme chaperone HemW (412 aa).

Positions 4–241 (GTYLMPTAAY…RHGQEVLTQA (238 aa)) constitute a Radical SAM core domain. Tyr-13 serves as a coordination point for S-adenosyl-L-methionine. Positions 19, 23, and 26 each coordinate [2Fe-2S] cluster. Residues Gly-72, 73–74 (GT), Glu-105, Gln-132, Arg-144, and Asp-169 each bind S-adenosyl-L-methionine.

This sequence belongs to the anaerobic coproporphyrinogen-III oxidase family. HemW subfamily. The cofactor is [4Fe-4S] cluster.

It localises to the cytoplasm. Its function is as follows. Probably acts as a heme chaperone, transferring heme to an unknown acceptor. Binds one molecule of heme per monomer, possibly covalently. Binds 1 [2Fe-2S] cluster. Although this protein has sequence motifs typically found in proteins binding the [4Fe-4S]-AdoMet radical-SAM cluster and S-adenosylmethionine, spectroscopic evidence suggests that a [2Fe-2S] cluster is present; S-adenosylmethionine was not detected. Has no detectable coproporphyrinogen-III oxidase activity. The protein is Heme chaperone HemW of Synechocystis sp. (strain ATCC 27184 / PCC 6803 / Kazusa).